We begin with the raw amino-acid sequence, 148 residues long: uncharacterized protein (148 aa).

Belongs to the SufE family.

This is an uncharacterized protein from Rhizobium etli (strain ATCC 51251 / DSM 11541 / JCM 21823 / NBRC 15573 / CFN 42).